The sequence spans 398 residues: Nicotinate phosphoribosyltransferase (398 aa).

H222 is modified (phosphohistidine; by autocatalysis).

The protein belongs to the NAPRTase family. In terms of processing, transiently phosphorylated on a His residue during the reaction cycle. Phosphorylation strongly increases the affinity for substrates and increases the rate of nicotinate D-ribonucleotide production. Dephosphorylation regenerates the low-affinity form of the enzyme, leading to product release.

The catalysed reaction is nicotinate + 5-phospho-alpha-D-ribose 1-diphosphate + ATP + H2O = nicotinate beta-D-ribonucleotide + ADP + phosphate + diphosphate. It participates in cofactor biosynthesis; NAD(+) biosynthesis; nicotinate D-ribonucleotide from nicotinate: step 1/1. Catalyzes the synthesis of beta-nicotinate D-ribonucleotide from nicotinate and 5-phospho-D-ribose 1-phosphate at the expense of ATP. The protein is Nicotinate phosphoribosyltransferase of Acidovorax ebreus (strain TPSY) (Diaphorobacter sp. (strain TPSY)).